The sequence spans 139 residues: Putative pre-16S rRNA nuclease (139 aa).

The protein belongs to the YqgF nuclease family.

The protein resides in the cytoplasm. In terms of biological role, could be a nuclease involved in processing of the 5'-end of pre-16S rRNA. The polypeptide is Putative pre-16S rRNA nuclease (Bacillus licheniformis (strain ATCC 14580 / DSM 13 / JCM 2505 / CCUG 7422 / NBRC 12200 / NCIMB 9375 / NCTC 10341 / NRRL NRS-1264 / Gibson 46)).